The chain runs to 251 residues: Long tail fiber protein Gp37 (251 aa).

The interval 134–137 is interaction with the receptor-recognizing protein gp38; that stretch reads DVYI. The Peptidase S74 domain maps to 139–237; sequence SDGRLKINKK…EEIKELKTPF (99 aa).

The protein belongs to the S16-like long tail fiber protein Gp37 family. As to quaternary structure, homotrimer. Interacts with the receptor-recognizing protein Gp38. Proteolytic cleavage and release of the chaperone in the host cytosol stabilizes the folded protein.

Its subcellular location is the virion. Constitues the trimeric tip of the long tail fiber that mediates the attachment to the host receptor, together with the receptor-recognizing protein Gp38. Functionally, the C-terminal chaperone protein mediates homotrimerization and proper folding of the catalytic trimer. The sequence is that of Long tail fiber protein Gp37 (37) from Escherichia coli (Bacteriophage Ox2).